We begin with the raw amino-acid sequence, 447 residues long: Innexin-5 (447 aa).

4 helical membrane-spanning segments follow: residues 30–47 (TSTLLGFSAIMMAASQYV), 108–128 (QWIPIVLVLQAFLFYLPSIIW), 198–218 (ALYLLVKILYLANIVLQFWIL), and 283–303 (VYVFFWFWLLFVGLLTVCSLA). The interval 389–447 (KKDDDSALPASAPVDLQEDDDDDTPFPPPTKAVAETLTSDDEEEETDVDSPDTTATLPR) is disordered. Residues 426–438 (TSDDEEEETDVDS) show a composition bias toward acidic residues.

It belongs to the pannexin family.

It is found in the cell membrane. The protein localises to the cell junction. The protein resides in the gap junction. Functionally, structural component of the gap junctions. This Caenorhabditis elegans protein is Innexin-5 (inx-5).